The sequence spans 239 residues: Peptidase E (239 aa).

Active-site charge relay system residues include Ser-122, Asp-137, and His-159.

The protein belongs to the peptidase S51 family.

The protein localises to the cytoplasm. It carries out the reaction Dipeptidase E catalyzes the hydrolysis of dipeptides Asp-|-Xaa. It does not act on peptides with N-terminal Glu, Asn or Gln, nor does it cleave isoaspartyl peptides.. Its function is as follows. Hydrolyzes dipeptides containing N-terminal aspartate residues. May play a role in allowing the cell to use peptide aspartate to spare carbon otherwise required for the synthesis of the aspartate family of amino acids. The polypeptide is Peptidase E (Shewanella baltica (strain OS195)).